Reading from the N-terminus, the 299-residue chain is tRNA dimethylallyltransferase (299 aa).

13-20 contacts ATP; the sequence is GPTASGKT. Residue 15–20 coordinates substrate; the sequence is TASGKT. Residues 38 to 41 form an interaction with substrate tRNA region; it reads DSRQ.

This sequence belongs to the IPP transferase family. Monomer. Mg(2+) is required as a cofactor.

The catalysed reaction is adenosine(37) in tRNA + dimethylallyl diphosphate = N(6)-dimethylallyladenosine(37) in tRNA + diphosphate. Catalyzes the transfer of a dimethylallyl group onto the adenine at position 37 in tRNAs that read codons beginning with uridine, leading to the formation of N6-(dimethylallyl)adenosine (i(6)A). In Prochlorococcus marinus (strain SARG / CCMP1375 / SS120), this protein is tRNA dimethylallyltransferase.